The sequence spans 461 residues: MGTIHLFRKPQRSFFGKLLREFRLVAADRRSWKILLFGVINLICTGFLLMWCSSTNSIALTAYTYLTIFDLFSLMTCLISYWVTLRKPSPVYSFGFERLEVLAVFASTVLAQLGALFILKESAERFLEQPEIHTGRLLVGTFVALCFNLFTMLSIRNKPFAYVSEAASTSWLQEHVADLSRSLCGIIPGLSSIFLPRMNPFVLIDLAGAFALCITYMLIEINNYFAVDTASAIAIALMTFGTMYPMSVYSGKVLLQTTPPHVIGQLDKLIREVSTLDGVLEVRNEHFWTLGFGSLAGSVHVRIRRDANEQMVLAHVTNRLYTLVSTLTVQIFKDDWIRPALLSGPVAANVLNFSDHHVIPMPLLKGTDDLNPVTSTPAKPSSPPPEFSFNTPGKNVNPVILLNTQTRPYGFGLNHGHTPYSSMLNQGLGVPGIGATQGLRTGFTNIPSRYGTNNRIGQPRP.

Residues 1 to 33 are Cytoplasmic-facing; the sequence is MGTIHLFRKPQRSFFGKLLREFRLVAADRRSWK. Residues 34–54 traverse the membrane as a helical segment; sequence ILLFGVINLICTGFLLMWCSS. Residues 55 to 64 are Extracellular-facing; the sequence is TNSIALTAYT. A helical membrane pass occupies residues 65 to 85; sequence YLTIFDLFSLMTCLISYWVTL. At 86–98 the chain is on the cytoplasmic side; it reads RKPSPVYSFGFER. Residues 99–119 form a helical membrane-spanning segment; it reads LEVLAVFASTVLAQLGALFIL. The Extracellular portion of the chain corresponds to 120 to 134; the sequence is KESAERFLEQPEIHT. The chain crosses the membrane as a helical span at residues 135–155; the sequence is GRLLVGTFVALCFNLFTMLSI. Over 156–200 the chain is Cytoplasmic; the sequence is RNKPFAYVSEAASTSWLQEHVADLSRSLCGIIPGLSSIFLPRMNP. A helical transmembrane segment spans residues 201-221; it reads FVLIDLAGAFALCITYMLIEI. Over 222 to 223 the chain is Extracellular; the sequence is NN. The helical transmembrane segment at 224 to 244 threads the bilayer; the sequence is YFAVDTASAIAIALMTFGTMY. The Cytoplasmic portion of the chain corresponds to 245 to 461; it reads PMSVYSGKVL…TNNRIGQPRP (217 aa). Positions 371-392 are disordered; that stretch reads NPVTSTPAKPSSPPPEFSFNTP.

It belongs to the cation diffusion facilitator (CDF) transporter (TC 2.A.4) family. SLC30A subfamily. As to quaternary structure, heterodimer with SLC30A5; form a functional zinc ion transmembrane transporter. Expressed in brain; especially in cerebellum, hippocampus, parahippocampal gyrus, superior and middle temporal gyrus. Also expressed in B-cells, colon, eye, and lung. Lower expression was present in bone, brain, cervix, ear, heart, kidney, muscle, nerve, pancreas, prostate, skin, stomach, and testis.

The protein resides in the golgi apparatus. Its subcellular location is the trans-Golgi network membrane. Its function is as follows. Has probably no intrinsic transporter activity but together with SLC30A5 forms a functional zinc ion:proton antiporter heterodimer, mediating zinc entry into the lumen of organelles along the secretory pathway. As part of that zinc ion:proton antiporter, contributes to zinc ion homeostasis within the early secretory pathway and regulates the activation and folding of enzymes like alkaline phosphatases and enzymes involved in phosphatidylinositol glycan anchor biosynthesis. This is Zinc transporter 6 from Homo sapiens (Human).